A 376-amino-acid chain; its full sequence is Putative MSV199 domain-containing protein 468L (376 aa).

Residues Gln-178 to Ile-261 are a coiled coil.

This Invertebrate iridescent virus 6 (IIV-6) protein is Putative MSV199 domain-containing protein 468L.